Reading from the N-terminus, the 417-residue chain is NADH-quinone oxidoreductase subunit D (417 aa).

This sequence belongs to the complex I 49 kDa subunit family. NDH-1 is composed of 14 different subunits. Subunits NuoB, C, D, E, F, and G constitute the peripheral sector of the complex.

It localises to the cell inner membrane. The catalysed reaction is a quinone + NADH + 5 H(+)(in) = a quinol + NAD(+) + 4 H(+)(out). In terms of biological role, NDH-1 shuttles electrons from NADH, via FMN and iron-sulfur (Fe-S) centers, to quinones in the respiratory chain. The immediate electron acceptor for the enzyme in this species is believed to be ubiquinone. Couples the redox reaction to proton translocation (for every two electrons transferred, four hydrogen ions are translocated across the cytoplasmic membrane), and thus conserves the redox energy in a proton gradient. The sequence is that of NADH-quinone oxidoreductase subunit D from Ralstonia pickettii (strain 12J).